The following is a 570-amino-acid chain: Glycine--tRNA ligase (570 aa).

Residues arginine 99 and glutamate 165 each coordinate substrate. Residues 197 to 199, 207 to 212, 324 to 325, and 443 to 446 contribute to the ATP site; these read RNE, IRLREF, EC, and GIDR. 212 to 216 lines the substrate pocket; the sequence is FTQAE. Substrate is bound at residue 439–443; the sequence is EPSFG.

The protein belongs to the class-II aminoacyl-tRNA synthetase family.

The protein resides in the cytoplasm. It catalyses the reaction tRNA(Gly) + glycine + ATP = glycyl-tRNA(Gly) + AMP + diphosphate. In terms of biological role, catalyzes the attachment of glycine to tRNA(Gly). This is Glycine--tRNA ligase from Pyrococcus horikoshii (strain ATCC 700860 / DSM 12428 / JCM 9974 / NBRC 100139 / OT-3).